Reading from the N-terminus, the 513-residue chain is Aspartic proteinase A2 (513 aa).

The first 24 residues, 1 to 24 (MGVYSRAVAFSVFVSFLLFFTAYS), serve as a signal peptide directing secretion. Positions 25 to 71 (KRNDGTFRVGLKKLKLDPNNRLATRFGSKQEEALRSSLRSYNNNLGG) are cleaved as a propeptide — activation peptide. Residues 89-510 (YYGEIAIGTP…DFGNEQVGFA (422 aa)) enclose the Peptidase A1 domain. Residue D107 is part of the active site. 2 disulfides stabilise this stretch: C120–C126 and C285–C289. D294 is a catalytic residue. Residues 319-424 (VVSQQCKTVV…NEICERMPSP (106 aa)) enclose the Saposin B-type domain. 4 disulfide bridges follow: C324–C418, C349–C390, C355–C387, and C432–C469. N-linked (GlcNAc...) asparagine glycosylation occurs at N404.

Belongs to the peptidase A1 family. Expressed in seed pods and dry seeds.

The protein resides in the vacuole. Functionally, involved in the breakdown of propeptides of storage proteins in protein-storage vacuoles. The chain is Aspartic proteinase A2 (APA2) from Arabidopsis thaliana (Mouse-ear cress).